We begin with the raw amino-acid sequence, 332 residues long: MVFRSPLDLYSSHFLLPNFADSHHRSILLASSGGGNGAGGGGGAGGGSGGGNGAGGGGAGGAGGGGGGGSRAPPEELSMFQLPTLNFSPEQVASVCETLEETGDIERLGRFLWSLPVAPGACEAINKHESILRARAVVAFHTGNFRDLYHILENHKFTKESHGKLQAMWLEAHYQEAEKLRGRPLGPVDKYRVRKKFPLPRTIWDGEQKTHCFKERTRSLLREWYLQDPYPNPSKKRELAQATGLTPTQVGNWFKNRRQRDRAAAAKNRLQHQAIGPSGMRSLAEPGCPTHGSAESPSTAASPTTSVSSLTERADTGTSILSVTSSDSECDV.

Positions 72–119 (APPEELSMFQLPTLNFSPEQVASVCETLEETGDIERLGRFLWSLPVAP) are interaction with TLE5. A DNA-binding region (homeobox) is located at residues 206–265 (GEQKTHCFKERTRSLLREWYLQDPYPNPSKKRELAQATGLTPTQVGNWFKNRRQRDRAAA). The bind to RHO promoter stretch occupies residues 232–234 (NPS). Disordered regions lie at residues 232–251 (NPSK…TQVG) and 258–332 (RQRD…ECDV). The segment covering 293-309 (SAESPSTAASPTTSVSS) has biased composition (low complexity). Residues 316–332 (TGTSILSVTSSDSECDV) show a composition bias toward polar residues.

Belongs to the SIX/Sine oculis homeobox family. In terms of assembly, interacts with EYA4; translocates EYA4 from the cytoplasm to the nucleus and promotes activation of their target genes. Interacts with MTA1 and HDAC2; represses its own transcription. Interacts with MTA1; facilitates the binding of SIX3 to the core DNA motif of SIX3 promoter. Interacts with EYA1; promotes EYA1 translocation to the nucleus. Interacts with TLE1 and TLE5 (via Q domain); can act in combination with either TLE1 and/or TLE5 leading to transcriptional repression or activation, respectively. Interacts (via homeobox) with NR4A3; differentially regulates the transcriptional activities NR4A3. Interacts with GMNN. Interacts with TLE4.

It is found in the nucleus. In terms of biological role, transcriptional regulator which can act as both a transcriptional repressor and activator by binding a ATTA homeodomain core recognition sequence on these target genes. During forebrain development represses WNT1 expression allowing zona limitans intrathalamica formation and thereby ensuring proper anterio-posterior patterning of the diencephalon and formation of the rostral diencephalon. Acts as a direct upstream activator of SHH expression in the rostral diencephalon ventral midline and that in turn SHH maintains its expression. In addition, Six3 activity is required for the formation of the telencephalon. During postnatal stages of brain development is necessary for ependymal cell maturation by promoting the maturation of radial glia into ependymal cells through regulation of neuroblast proliferation and migration. Acts on the proliferation and differentiation of neural progenitor cells through activating transcription of CCND1 and CCND2. During early lens formation plays a role in lens induction and specification by activating directly PAX6 in the presumptive lens ectoderm. In turn PAX6 activates SIX3 resulting in activation of PDGFRA and CCND1 promoting cell proliferation. Also is required for the neuroretina development by directly suppressing WNT8B expression in the anterior neural plate territory. Its action during retina development and lens morphogenesis is TLE5 and TLE4-dependent manner. Furthermore, during eye development regulates several genes expression. Before and during early lens development represses the CRYGF promoter by binding a SIX repressor element. Directly activates RHO transcription, or cooperates with CRX or NRL. Six3 also functions in the formation of the proximodistal axis of the optic cup, and promotes the formation of optic vesicles-like structures. During pituitary development, acts in parallel or alternatively with HESX1 to control cell proliferation through Wnt/beta-catenin pathway. Plays a role in eye development by suppressing WNT1 expression and in dorsal-ventral patterning by repressing BMP signaling pathway. This is Homeobox protein SIX3 (SIX3) from Homo sapiens (Human).